The sequence spans 104 residues: UPF0212 protein PH1312 (104 aa).

It belongs to the UPF0212 family.

The sequence is that of UPF0212 protein PH1312 from Pyrococcus horikoshii (strain ATCC 700860 / DSM 12428 / JCM 9974 / NBRC 100139 / OT-3).